The primary structure comprises 164 residues: MTIALFPGSFDPITNGHIETAKKAAEIFEKVYLVAMTNTSKHYLFSPGERADFARDALKDVANIEVLEKPDEITVDLAHELNAKAIVRGVRNSADFRYEQEIAGINKRLAPDINTILLFSSPENSFVASSMIKELAKFDKDVSQFLPEKAAKALRRKLGNEYAE.

S9 lines the substrate pocket. Residues 9 to 10 (SF) and H17 contribute to the ATP site. Substrate is bound by residues K41, T74, and R88. Residues 89 to 91 (GVR), E99, and 124 to 130 (NSFVASS) each bind ATP.

This sequence belongs to the bacterial CoaD family. As to quaternary structure, homohexamer. It depends on Mg(2+) as a cofactor.

It is found in the cytoplasm. The enzyme catalyses (R)-4'-phosphopantetheine + ATP + H(+) = 3'-dephospho-CoA + diphosphate. It functions in the pathway cofactor biosynthesis; coenzyme A biosynthesis; CoA from (R)-pantothenate: step 4/5. In terms of biological role, reversibly transfers an adenylyl group from ATP to 4'-phosphopantetheine, yielding dephospho-CoA (dPCoA) and pyrophosphate. This chain is Phosphopantetheine adenylyltransferase, found in Lactobacillus helveticus (strain DPC 4571).